Consider the following 229-residue polypeptide: Interleukin-22 receptor subunit alpha-2 (229 aa).

Positions 1 to 19 are cleaved as a signal peptide; sequence MPKHCFLGLLIMLLTTATE. 2 Fibronectin type-III domains span residues 28-127 and 128-229; these read KPQK…TKLD and PPVV…VQIP. N-linked (GlcNAc...) asparagine glycosylation occurs at N54. Cystine bridges form between C76-C84 and C204-C225.

The protein belongs to the type II cytokine receptor family.

The protein resides in the secreted. In terms of biological role, receptor for IL22. Binds to IL22, prevents interaction with the functional IL-22R complex and blocks the activity of IL22 (in vitro). May play an important role as an IL22 antagonist in the regulation of inflammatory responses. The protein is Interleukin-22 receptor subunit alpha-2 (Il22ra2) of Rattus norvegicus (Rat).